The following is a 1591-amino-acid chain: GATOR1 complex protein DEPDC5 (1591 aa).

Disordered regions lie at residues 427–455 (GKKSASEKTKNGRDTSLGTPKESENTLPI), 478–532 (LATC…STNI), and 695–720 (LSNSSTGVNPRTQNKDSLEDSVSTSP). Residues 430–439 (SASEKTKNGR) show a composition bias toward basic and acidic residues. The span at 494 to 508 (SASSCDVSSSPSLPS) shows a compositional bias: low complexity. Serine 505 is modified (phosphoserine). Positions 518 to 532 (SQASDDSSLGKSTNI) are enriched in polar residues. Serine 992 is subject to Phosphoserine. 2 disordered regions span residues 1040 to 1064 (SQKSLGEQQTTVHGKSSTQPAENSS) and 1118 to 1153 (STGQPMDRGNNQTFGNSQNIEQAFPSANSGDYSSQQ). Positions 1118-1149 (STGQPMDRGNNQTFGNSQNIEQAFPSANSGDY) are enriched in polar residues. The 76-residue stretch at 1175 to 1250 (PSTGVQLLSE…YGFYFYKIVM (76 aa)) folds into the DEP domain. Phosphoserine is present on serine 1518.

This sequence belongs to the IML1 family. As to quaternary structure, within the GATOR complex, component of the GATOR1 subcomplex, made of DEPDC5, NPRL2 and NPRL3. GATOR1 mediates the strong interaction of the GATOR complex with small GTPases Rag (RagA/RRAGA, RagB/RRAGB, RagC/RRAGC and/or RagD/RRAGD) heterodimers. GATOR1 interacts with GPR155/LYCHOS; interaction takes place in presence of cholesterol and prevents interaction between GATOR1 and KICSTOR. Interacts with SAMTOR; interaction is direct and takes place in presence of methionine, leading to inhibit the activity of the GATOR1 complex. Post-translationally, phosphorylation at Ser-992 and Ser-1518 by AKT1 and PIM1 inhibit the activity of DEPDC5, releasing inhibition of the mTORC1 pathway. In terms of processing, ubiquitinated. Amino acid-induced 'Lys-48'-linked polyubiquitination of DEPDC5 by the BCR(KLHL22) ubiquitin ligase complex leads to DEPDC5 proteasomal degradation and inhibition of the GATOR1 complex. Ubiquitination may occur at multiple lysines. In terms of tissue distribution, expressed at low levels in all brain regions. Expressed throughout brain development, including in midgestation embryonic head (11.5 dpc), neonatal brain and whole adult brain. Present in neurons and absent in non-neuronal cells, including astrocytes (at protein level).

It localises to the lysosome membrane. It is found in the cytoplasm. Its subcellular location is the cytosol. The protein resides in the perinuclear region. As a component of the GATOR1 complex functions as an inhibitor of the amino acid-sensing branch of the mTORC1 pathway. In response to amino acid depletion, the GATOR1 complex has GTPase activating protein (GAP) activity and strongly increases GTP hydrolysis by RagA/RRAGA (or RagB/RRAGB) within heterodimeric Rag complexes, thereby turning them into their inactive GDP-bound form, releasing mTORC1 from lysosomal surface and inhibiting mTORC1 signaling. In the presence of abundant amino acids, the GATOR1 complex is negatively regulated by GATOR2, the other GATOR subcomplex, in this amino acid-sensing branch of the TORC1 pathway. Within the GATOR1 complex, DEPDC5 mediates direct interaction with the nucleotide-binding pocket of small GTPases Rag (RagA/RRAGA, RagB/RRAGB, RagC/RRAGC and/or RagD/RRAGD) and coordinates their nucleotide loading states by promoting RagA/RRAGA or RagB/RRAGB into their GDP-binding state and RagC/RRAGC or RagD/RRAGD into their GTP-binding state. However, it does not execute the GAP activity, which is mediated by NPRL2. The chain is GATOR1 complex protein DEPDC5 from Mus musculus (Mouse).